The following is a 112-amino-acid chain: Carboxysome shell protein CcmK4 (112 aa).

The BMC domain maps to 6 to 92; sequence AVGSIETIGF…PHENVVAVLP (87 aa).

This sequence belongs to the bacterial microcompartments protein family. CcmK subfamily. As to quaternary structure, homohexamer. Interacts with full-length CcmM. Forms mixed heterohexamers with CcmK3, probably with 1:5 CcmK3:CcmK4 stoichiometry. Only very weak interactions with CcmK1 and CcmK2 were seen.

Its subcellular location is the carboxysome. Functionally, a probably minor shell protein component of the carboxysome, a polyhedral inclusion where RuBisCO (ribulose bisphosphate carboxylase, rbcL-rbcS) is sequestered. The central pore probably regulates metabolite flux, as might the gaps between assembled homohexamers. Homohexamers make sheets that probably form the facets of the polyhedral carboxysome. This subunit probably makes both homohexamers and heterohexamers with CcmK3. The chain is Carboxysome shell protein CcmK4 from Synechocystis sp. (strain ATCC 27184 / PCC 6803 / Kazusa).